Consider the following 400-residue polypeptide: Acetate kinase (400 aa).

Asn10 lines the Mg(2+) pocket. An ATP-binding site is contributed by Lys17. Arg91 serves as a coordination point for substrate. Asp148 functions as the Proton donor/acceptor in the catalytic mechanism. Residues 208 to 212, 283 to 285, and 331 to 335 contribute to the ATP site; these read HLGNG, DCR, and GIGEN. Glu385 is a Mg(2+) binding site.

It belongs to the acetokinase family. In terms of assembly, homodimer. The cofactor is Mg(2+). Mn(2+) serves as cofactor.

The protein localises to the cytoplasm. It carries out the reaction acetate + ATP = acetyl phosphate + ADP. It participates in metabolic intermediate biosynthesis; acetyl-CoA biosynthesis; acetyl-CoA from acetate: step 1/2. Catalyzes the formation of acetyl phosphate from acetate and ATP. Can also catalyze the reverse reaction. This Shewanella frigidimarina (strain NCIMB 400) protein is Acetate kinase.